The following is an 83-amino-acid chain: Cytochrome b559 subunit alpha (83 aa).

A helical membrane pass occupies residues 21–35 (VIHSITIPSLFIAGW). Histidine 23 contributes to the heme binding site.

This sequence belongs to the PsbE/PsbF family. As to quaternary structure, heterodimer of an alpha subunit and a beta subunit. PSII is composed of 1 copy each of membrane proteins PsbA, PsbB, PsbC, PsbD, PsbE, PsbF, PsbH, PsbI, PsbJ, PsbK, PsbL, PsbM, PsbT, PsbX, PsbY, PsbZ, Psb30/Ycf12, at least 3 peripheral proteins of the oxygen-evolving complex and a large number of cofactors. It forms dimeric complexes. Heme b is required as a cofactor.

The protein localises to the plastid. Its subcellular location is the chloroplast thylakoid membrane. In terms of biological role, this b-type cytochrome is tightly associated with the reaction center of photosystem II (PSII). PSII is a light-driven water:plastoquinone oxidoreductase that uses light energy to abstract electrons from H(2)O, generating O(2) and a proton gradient subsequently used for ATP formation. It consists of a core antenna complex that captures photons, and an electron transfer chain that converts photonic excitation into a charge separation. The polypeptide is Cytochrome b559 subunit alpha (Helianthus annuus (Common sunflower)).